A 187-amino-acid chain; its full sequence is Protein GrpE (187 aa).

The span at 1 to 15 shows a compositional bias: basic and acidic residues; the sequence is MKETKQEEMEVREDC. Positions 1 to 40 are disordered; sequence MKETKQEEMEVREDCESVDSNLEATVEEMESTKGTSEDLE.

This sequence belongs to the GrpE family. Homodimer.

The protein resides in the cytoplasm. Its function is as follows. Participates actively in the response to hyperosmotic and heat shock by preventing the aggregation of stress-denatured proteins, in association with DnaK and GrpE. It is the nucleotide exchange factor for DnaK and may function as a thermosensor. Unfolded proteins bind initially to DnaJ; upon interaction with the DnaJ-bound protein, DnaK hydrolyzes its bound ATP, resulting in the formation of a stable complex. GrpE releases ADP from DnaK; ATP binding to DnaK triggers the release of the substrate protein, thus completing the reaction cycle. Several rounds of ATP-dependent interactions between DnaJ, DnaK and GrpE are required for fully efficient folding. This Alkaliphilus oremlandii (strain OhILAs) (Clostridium oremlandii (strain OhILAs)) protein is Protein GrpE.